A 324-amino-acid chain; its full sequence is Glycerol-3-phosphate dehydrogenase [NAD(P)+] (324 aa).

Residues W15, R35, and K101 each coordinate NADPH. 2 residues coordinate sn-glycerol 3-phosphate: K101 and G129. A133 lines the NADPH pocket. K184, D237, S247, R248, and N249 together coordinate sn-glycerol 3-phosphate. The active-site Proton acceptor is the K184. R248 lines the NADPH pocket. NADPH contacts are provided by V272 and E274.

The protein belongs to the NAD-dependent glycerol-3-phosphate dehydrogenase family.

The protein resides in the cytoplasm. The enzyme catalyses sn-glycerol 3-phosphate + NAD(+) = dihydroxyacetone phosphate + NADH + H(+). It catalyses the reaction sn-glycerol 3-phosphate + NADP(+) = dihydroxyacetone phosphate + NADPH + H(+). The protein operates within membrane lipid metabolism; glycerophospholipid metabolism. Functionally, catalyzes the reduction of the glycolytic intermediate dihydroxyacetone phosphate (DHAP) to sn-glycerol 3-phosphate (G3P), the key precursor for phospholipid synthesis. The sequence is that of Glycerol-3-phosphate dehydrogenase [NAD(P)+] from Gluconobacter oxydans (strain 621H) (Gluconobacter suboxydans).